The chain runs to 246 residues: tRNA (guanine-N(1)-)-methyltransferase (246 aa).

Residues G114 and 134–139 (IGDYIL) contribute to the S-adenosyl-L-methionine site.

It belongs to the RNA methyltransferase TrmD family. As to quaternary structure, homodimer.

The protein resides in the cytoplasm. The enzyme catalyses guanosine(37) in tRNA + S-adenosyl-L-methionine = N(1)-methylguanosine(37) in tRNA + S-adenosyl-L-homocysteine + H(+). Functionally, specifically methylates guanosine-37 in various tRNAs. In Coxiella burnetii (strain CbuG_Q212) (Coxiella burnetii (strain Q212)), this protein is tRNA (guanine-N(1)-)-methyltransferase.